Here is a 349-residue protein sequence, read N- to C-terminus: uncharacterized protein (349 aa).

The first 29 residues, 1-29 (MKQKYENYFKKRLILNLLIFLLLACSSES), serve as a signal peptide directing secretion.

This is an uncharacterized protein from Borreliella burgdorferi (strain ATCC 35210 / DSM 4680 / CIP 102532 / B31) (Borrelia burgdorferi).